We begin with the raw amino-acid sequence, 314 residues long: tRNA dimethylallyltransferase (314 aa).

10-17 (GPTAVGKT) is a binding site for ATP. A substrate-binding site is contributed by 12 to 17 (TAVGKT). The interval 35-38 (DSMQ) is interaction with substrate tRNA.

Belongs to the IPP transferase family. Monomer. Mg(2+) serves as cofactor.

It catalyses the reaction adenosine(37) in tRNA + dimethylallyl diphosphate = N(6)-dimethylallyladenosine(37) in tRNA + diphosphate. Functionally, catalyzes the transfer of a dimethylallyl group onto the adenine at position 37 in tRNAs that read codons beginning with uridine, leading to the formation of N6-(dimethylallyl)adenosine (i(6)A). The polypeptide is tRNA dimethylallyltransferase (Clostridium novyi (strain NT)).